We begin with the raw amino-acid sequence, 382 residues long: GDSL esterase/lipase At4g01130 (382 aa).

The signal sequence occupies residues 1-28; it reads MASDINRRRSFSLLVLIIVMLYGHKGDS. S41 functions as the Nucleophile in the catalytic mechanism. Residues N118, N263, N275, and N330 are each glycosylated (N-linked (GlcNAc...) asparagine). Catalysis depends on residues D348 and H351.

This sequence belongs to the 'GDSL' lipolytic enzyme family.

Its subcellular location is the secreted. The polypeptide is GDSL esterase/lipase At4g01130 (Arabidopsis thaliana (Mouse-ear cress)).